A 425-amino-acid chain; its full sequence is Glutamyl-tRNA reductase (425 aa).

Substrate is bound by residues Thr49–Arg52, Ser107, Glu112–Gln114, and Gln118. Cys50 acts as the Nucleophile in catalysis. Gly187 to Ile192 is a binding site for NADP(+).

It belongs to the glutamyl-tRNA reductase family. Homodimer.

The enzyme catalyses (S)-4-amino-5-oxopentanoate + tRNA(Glu) + NADP(+) = L-glutamyl-tRNA(Glu) + NADPH + H(+). It functions in the pathway porphyrin-containing compound metabolism; protoporphyrin-IX biosynthesis; 5-aminolevulinate from L-glutamyl-tRNA(Glu): step 1/2. In terms of biological role, catalyzes the NADPH-dependent reduction of glutamyl-tRNA(Glu) to glutamate 1-semialdehyde (GSA). The polypeptide is Glutamyl-tRNA reductase (Pseudomonas putida (strain ATCC 700007 / DSM 6899 / JCM 31910 / BCRC 17059 / LMG 24140 / F1)).